The chain runs to 317 residues: Carbonic anhydrase 5B, mitochondrial (317 aa).

The transit peptide at 1 to 33 (MAVMNHLRVILQVSSSTLPWRRCWVPRLVPRRS) directs the protein to the mitochondrion. One can recognise an Alpha-carbonic anhydrase domain in the interval 37 to 296 (YTCTYRTRNR…LMNRTVRSSF (260 aa)). 3 residues coordinate Zn(2+): His-130, His-132, and His-155. 235–236 (TT) contacts substrate.

Belongs to the alpha-carbonic anhydrase family. Requires Zn(2+) as cofactor. As to expression, expressed in the heart, liver, lung, kidney, testis, and skeletal muscle (at protein level).

The protein localises to the mitochondrion. It carries out the reaction hydrogencarbonate + H(+) = CO2 + H2O. Mitochondrial carbonic anhydrase that catalyzes the reversible conversion of carbon dioxide to bicarbonate/HCO3. The sequence is that of Carbonic anhydrase 5B, mitochondrial (Ca5b) from Mus musculus (Mouse).